The following is a 484-amino-acid chain: Penton protein (484 aa).

Residues 1-24 (MRRMMPAAPPQGASPPPSYESVVG) form a disordered region. Residues 7 to 18 (AAPPQGASPPPS) are compositionally biased toward pro residues.

The protein belongs to the adenoviridae penton family. Interacts with the fiber protein (via N-terminal tail region). Interacts with the capsid vertex protein; this interaction binds the penton base to neighboring peripentonal hexons.

The protein localises to the virion. The protein resides in the host nucleus. In terms of biological role, major capsid protein that self-associates to form penton base pentamers, each in the shape of a pentagon, situated at the 12 vertices of the pseudo T=25 capsid. Involved in virus secondary attachment to host cell after initial attachment by the fiber protein, and in endocytosis of virions. As the virus enters the host cell, penton proteins are shed concomitant with virion acidification in the endosome. The sequence is that of Penton protein from Sus scrofa (Pig).